A 258-amino-acid polypeptide reads, in one-letter code: MGLSGKNVIFVGGLGFIGYEACKQLMAKNMASFFVFDVLDKPENIKALQALNPKTKVYYTKFDITSKQSIKSALADVVAKVKYIDALINGAGILTDPNVELTMNINLIGLINTTLEGLPLMDKNKQGRGGVIVNIASVLGLEPCPPAAVYCASKFGVMGFSRSIGDPYYYNITGVAVVTFCPGLTETPLKNNIGSKYTFEYSKKISEELNSTKTQKPEVCGAHLAQVVESHENGGIYISNQGTLAKVTPTVYWQPTYH.

An NAD(+)-binding site is contributed by 9-33 (IFVGGLGFIGYEACKQLMAKNMASF). Serine 137 serves as a coordination point for substrate. The active-site Proton acceptor is tyrosine 150.

The protein belongs to the short-chain dehydrogenases/reductases (SDR) family. As to quaternary structure, homodimer.

The enzyme catalyses a primary alcohol + NAD(+) = an aldehyde + NADH + H(+). The catalysed reaction is a secondary alcohol + NAD(+) = a ketone + NADH + H(+). The polypeptide is Alcohol dehydrogenase 2 (ADH2) (Ceratitis capitata (Mediterranean fruit fly)).